The following is a 1217-amino-acid chain: ATP-dependent helicase/nuclease subunit A (1217 aa).

Positions 10–475 constitute a UvrD-like helicase ATP-binding domain; that stretch reads VIWTDAQWQS…IDLSQNFRSR (466 aa). 31–38 lines the ATP pocket; the sequence is AAAGSGKT. Positions 476–786 constitute a UvrD-like helicase C-terminal domain; that stretch reads KEVLSTTNYI…RMMTIHSSKG (311 aa).

This sequence belongs to the helicase family. AddA subfamily. Heterodimer of AddA and AddB/RexB. Requires Mg(2+) as cofactor.

It carries out the reaction Couples ATP hydrolysis with the unwinding of duplex DNA by translocating in the 3'-5' direction.. It catalyses the reaction ATP + H2O = ADP + phosphate + H(+). The heterodimer acts as both an ATP-dependent DNA helicase and an ATP-dependent, dual-direction single-stranded exonuclease. Recognizes the chi site generating a DNA molecule suitable for the initiation of homologous recombination. The AddA nuclease domain is required for chi fragment generation; this subunit has the helicase and 3' -&gt; 5' nuclease activities. The sequence is that of ATP-dependent helicase/nuclease subunit A from Staphylococcus aureus (strain USA300).